A 397-amino-acid polypeptide reads, in one-letter code: Protochlorophyllide reductase, chloroplastic (397 aa).

The transit peptide at Met-1–Ala-57 directs the protein to the chloroplast.

Belongs to the short-chain dehydrogenases/reductases (SDR) family. POR subfamily.

It is found in the plastid. Its subcellular location is the chloroplast. It catalyses the reaction chlorophyllide a + NADP(+) = protochlorophyllide a + NADPH + H(+). The protein operates within porphyrin-containing compound metabolism; chlorophyll biosynthesis. Phototransformation of protochlorophyllide (Pchlide) to chlorophyllide (Chlide). This is Protochlorophyllide reductase, chloroplastic (PORA) from Chlamydomonas reinhardtii (Chlamydomonas smithii).